A 439-amino-acid chain; its full sequence is Methionine aminopeptidase 2-2 (439 aa).

The tract at residues 1–90 (MAAQAPPTDE…SQLFPDKQYP (90 aa)) is disordered. Over residues 10–23 (ELSKLSVEDADNKP) the composition is skewed to basic and acidic residues. A compositionally biased stretch (acidic residues) spans 35 to 45 (DEDDSEDDAED). The segment covering 54-68 (AKKKKKRKPRKKKKN) has biased composition (basic residues). Histidine 192 contributes to the substrate binding site. Aspartate 212, aspartate 223, and histidine 292 together coordinate a divalent metal cation. Histidine 300 serves as a coordination point for substrate. The a divalent metal cation site is built by glutamate 325 and glutamate 420.

The protein belongs to the peptidase M24A family. Methionine aminopeptidase eukaryotic type 2 subfamily. The cofactor is Co(2+). Zn(2+) is required as a cofactor. It depends on Mn(2+) as a cofactor. Requires Fe(2+) as cofactor.

It is found in the cytoplasm. It carries out the reaction Release of N-terminal amino acids, preferentially methionine, from peptides and arylamides.. Functionally, cotranslationally removes the N-terminal methionine from nascent proteins. The N-terminal methionine is often cleaved when the second residue in the primary sequence is small and uncharged (Met-Ala-, Cys, Gly, Pro, Ser, Thr, or Val). This Chaetomium globosum (strain ATCC 6205 / CBS 148.51 / DSM 1962 / NBRC 6347 / NRRL 1970) (Soil fungus) protein is Methionine aminopeptidase 2-2.